A 289-amino-acid chain; its full sequence is ATP synthase subunit a (289 aa).

6 helical membrane-spanning segments follow: residues 43–63, 104–124, 160–180, 193–213, 232–252, and 259–279; these read AFHV…LFIF, IAPL…IDLV, ISVF…GGFL, IVVQ…TLIA, IFIL…ALGV, and AVFH…LTIV.

The protein belongs to the ATPase A chain family. F-type ATPases have 2 components, CF(1) - the catalytic core - and CF(0) - the membrane proton channel. CF(1) has five subunits: alpha(3), beta(3), gamma(1), delta(1), epsilon(1). CF(0) has three main subunits: a(1), b(2) and c(9-12). The alpha and beta chains form an alternating ring which encloses part of the gamma chain. CF(1) is attached to CF(0) by a central stalk formed by the gamma and epsilon chains, while a peripheral stalk is formed by the delta and b chains.

It localises to the cell inner membrane. Functionally, key component of the proton channel; it plays a direct role in the translocation of protons across the membrane. This Pseudomonas paraeruginosa (strain DSM 24068 / PA7) (Pseudomonas aeruginosa (strain PA7)) protein is ATP synthase subunit a.